We begin with the raw amino-acid sequence, 503 residues long: Maturase K (503 aa).

Belongs to the intron maturase 2 family. MatK subfamily.

It is found in the plastid. It localises to the chloroplast. Usually encoded in the trnK tRNA gene intron. Probably assists in splicing its own and other chloroplast group II introns. This chain is Maturase K, found in Diospyros kaki (Kaki persimmon).